The following is a 209-amino-acid chain: Small ribosomal subunit protein uS4 (209 aa).

An S4 RNA-binding domain is found at Arg98–Asp159.

This sequence belongs to the universal ribosomal protein uS4 family. In terms of assembly, part of the 30S ribosomal subunit. Contacts protein S5. The interaction surface between S4 and S5 is involved in control of translational fidelity.

Its function is as follows. One of the primary rRNA binding proteins, it binds directly to 16S rRNA where it nucleates assembly of the body of the 30S subunit. Functionally, with S5 and S12 plays an important role in translational accuracy. This Syntrophotalea carbinolica (strain DSM 2380 / NBRC 103641 / GraBd1) (Pelobacter carbinolicus) protein is Small ribosomal subunit protein uS4.